A 162-amino-acid polypeptide reads, in one-letter code: 6,7-dimethyl-8-ribityllumazine synthase (162 aa).

5-amino-6-(D-ribitylamino)uracil-binding positions include tyrosine 27, 58–60, and 87–89; these read ALE and CVI. (2S)-2-hydroxy-3-oxobutyl phosphate is bound at residue 92–93; the sequence is ET. Histidine 95 serves as the catalytic Proton donor. Asparagine 120 lines the 5-amino-6-(D-ribitylamino)uracil pocket. Arginine 134 contributes to the (2S)-2-hydroxy-3-oxobutyl phosphate binding site.

Belongs to the DMRL synthase family.

It carries out the reaction (2S)-2-hydroxy-3-oxobutyl phosphate + 5-amino-6-(D-ribitylamino)uracil = 6,7-dimethyl-8-(1-D-ribityl)lumazine + phosphate + 2 H2O + H(+). It participates in cofactor biosynthesis; riboflavin biosynthesis; riboflavin from 2-hydroxy-3-oxobutyl phosphate and 5-amino-6-(D-ribitylamino)uracil: step 1/2. Its function is as follows. Catalyzes the formation of 6,7-dimethyl-8-ribityllumazine by condensation of 5-amino-6-(D-ribitylamino)uracil with 3,4-dihydroxy-2-butanone 4-phosphate. This is the penultimate step in the biosynthesis of riboflavin. The chain is 6,7-dimethyl-8-ribityllumazine synthase from Azorhizobium caulinodans (strain ATCC 43989 / DSM 5975 / JCM 20966 / LMG 6465 / NBRC 14845 / NCIMB 13405 / ORS 571).